The primary structure comprises 544 residues: NXPE family member 4 (544 aa).

A signal peptide spans methionine 1–phenylalanine 27. 7 N-linked (GlcNAc...) asparagine glycosylation sites follow: asparagine 29, asparagine 38, asparagine 47, asparagine 48, asparagine 92, asparagine 160, and asparagine 210.

Belongs to the NXPE family.

It is found in the secreted. The chain is NXPE family member 4 (NXPE4) from Homo sapiens (Human).